Reading from the N-terminus, the 1385-residue chain is Probable serine/threonine-protein kinase DDB_G0268876 (1385 aa).

Residues 758 to 1008 form the Protein kinase domain; it reads LELTKEIGRG…QQIITYLENL (251 aa). Residues 764 to 772 and K785 each bind ATP; that span reads IGRGVSGVV. Catalysis depends on D878, which acts as the Proton acceptor. 3 disordered regions span residues 1040–1074, 1091–1266, and 1287–1339; these read GGNSDEHESNIDIDTVSGSNNNESSTAVSLNENKI, EVSK…SVGG, and ISSS…NNNN. Residues 1055-1073 show a composition bias toward polar residues; the sequence is VSGSNNNESSTAVSLNENK. Residues 1107-1144 show a composition bias toward low complexity; that stretch reads SSSTSSSPSTLSAPQSPVGSTSPMGSTSTSPISNNNNR. Residues 1145–1162 show a composition bias toward basic and acidic residues; sequence PTHDHQQPHQVKWERIVP. Composition is skewed to low complexity over residues 1189-1232, 1242-1266, and 1295-1339; these read NNNN…SSGI, FLSSGSSLSEQHRSVSNSVSNSVGG, and NNNN…NNNN.

It belongs to the protein kinase superfamily. TKL Ser/Thr protein kinase family.

The enzyme catalyses L-seryl-[protein] + ATP = O-phospho-L-seryl-[protein] + ADP + H(+). The catalysed reaction is L-threonyl-[protein] + ATP = O-phospho-L-threonyl-[protein] + ADP + H(+). This is Probable serine/threonine-protein kinase DDB_G0268876 from Dictyostelium discoideum (Social amoeba).